The sequence spans 295 residues: Inositol monophosphatase 1 (295 aa).

Mg(2+) is bound by residues Glu-73, Asp-92, Ile-94, Asp-95, and Asp-231. Residue Glu-73 coordinates substrate. Substrate contacts are provided by residues 94–97 (IDGT) and Asp-231.

Belongs to the inositol monophosphatase superfamily. The cofactor is Mg(2+).

The protein localises to the cytoplasm. The protein resides in the nucleus. The catalysed reaction is a myo-inositol phosphate + H2O = myo-inositol + phosphate. It participates in polyol metabolism; myo-inositol biosynthesis; myo-inositol from D-glucose 6-phosphate: step 2/2. Its activity is regulated as follows. Inhibited by Li(+) and Na(+). Responsible for the provision of inositol required for synthesis of phosphatidylinositol and polyphosphoinositides. The sequence is that of Inositol monophosphatase 1 (INM1) from Saccharomyces cerevisiae (strain ATCC 204508 / S288c) (Baker's yeast).